The following is a 639-amino-acid chain: Cystathionine gamma-synthase (639 aa).

Position 443 is an N6-(pyridoxal phosphate)lysine (lysine 443).

This sequence belongs to the trans-sulfuration enzymes family. MET7 subfamily. It depends on pyridoxal 5'-phosphate as a cofactor.

The protein localises to the cytoplasm. Its subcellular location is the nucleus. It carries out the reaction O-succinyl-L-homoserine + L-cysteine = L,L-cystathionine + succinate + H(+). It participates in amino-acid biosynthesis; L-methionine biosynthesis via de novo pathway; L-cystathionine from O-succinyl-L-homoserine: step 1/1. Functionally, catalyzes the formation of L-cystathionine from O-succinyl-L-homoserine (OSHS) and L-cysteine, via a gamma-replacement reaction. In the absence of thiol, catalyzes gamma-elimination to form 2-oxobutanoate, succinate and ammonia. In Saccharomyces cerevisiae (strain ATCC 204508 / S288c) (Baker's yeast), this protein is Cystathionine gamma-synthase.